A 240-amino-acid polypeptide reads, in one-letter code: Serine protease SplB (240 aa).

A signal peptide spans methionine 1–alanine 36. Catalysis depends on charge relay system residues histidine 75, aspartate 113, and serine 193.

It belongs to the peptidase S1B family.

The protein localises to the secreted. Serine protease that cleaves specifically after the sequence Trp-Glu-Leu-Gln. This chain is Serine protease SplB (splB), found in Staphylococcus aureus (strain bovine RF122 / ET3-1).